The sequence spans 417 residues: Histidine biosynthesis bifunctional protein his7 (417 aa).

Residues 225–299 (GLVYSSKESV…HLDTLHCFGQ (75 aa)) are phosphoribosyl-AMP cyclohydrolase. The tract at residues 303 to 387 (LCQLEKTLID…ISRHLDLKHR (85 aa)) is phosphoribosyl-ATP pyrophosphohydrolase.

Its subcellular location is the cytoplasm. The catalysed reaction is 1-(5-phospho-beta-D-ribosyl)-5'-AMP + H2O = 1-(5-phospho-beta-D-ribosyl)-5-[(5-phospho-beta-D-ribosylamino)methylideneamino]imidazole-4-carboxamide. It catalyses the reaction 1-(5-phospho-beta-D-ribosyl)-ATP + H2O = 1-(5-phospho-beta-D-ribosyl)-5'-AMP + diphosphate + H(+). It functions in the pathway amino-acid biosynthesis; L-histidine biosynthesis; L-histidine from 5-phospho-alpha-D-ribose 1-diphosphate: step 2/9. It participates in amino-acid biosynthesis; L-histidine biosynthesis; L-histidine from 5-phospho-alpha-D-ribose 1-diphosphate: step 3/9. In Schizosaccharomyces pombe (strain 972 / ATCC 24843) (Fission yeast), this protein is Histidine biosynthesis bifunctional protein his7.